We begin with the raw amino-acid sequence, 25 residues long: GLLSVLGSVVKHVIPHVVPVIAEHL.

L25 carries the post-translational modification Leucine amide.

Expressed by the skin parotoid and/or rostral glands.

The protein resides in the secreted. In terms of biological role, antibacterial peptide, that adopts an alpha helical conformation which can disrupt bacterial membranes. Each caerin displays a different antimicrobial specificity. The sequence is that of Caerin-1.5 from Ranoidea caerulea (Green tree frog).